A 280-amino-acid polypeptide reads, in one-letter code: Urease accessory protein UreD (280 aa).

This sequence belongs to the UreD family. UreD, UreF and UreG form a complex that acts as a GTP-hydrolysis-dependent molecular chaperone, activating the urease apoprotein by helping to assemble the nickel containing metallocenter of UreC. The UreE protein probably delivers the nickel.

Its subcellular location is the cytoplasm. Required for maturation of urease via the functional incorporation of the urease nickel metallocenter. The protein is Urease accessory protein UreD of Mesorhizobium japonicum (strain LMG 29417 / CECT 9101 / MAFF 303099) (Mesorhizobium loti (strain MAFF 303099)).